A 1461-amino-acid polypeptide reads, in one-letter code: Neogenin (1461 aa).

The first 33 residues, 1-33 (MAAERGARRLLSTPSFWLYCLLLLGRRAPGAAA), serve as a signal peptide directing secretion. Residues 34–1105 (ARSGSAPQSP…PTSPLDSNML (1072 aa)) are Extracellular-facing. Ig-like C2-type domains lie at 52–141 (PFYF…TIIS), 152–238 (PRFT…VELK), 243–336 (PEVI…AELT), and 341–426 (PEFL…AQLI). Residue Asn73 is glycosylated (N-linked (GlcNAc...) asparagine). 3 disulfide bridges follow: Cys74–Cys129, Cys173–Cys221, and Cys270–Cys320. Asn210 carries an N-linked (GlcNAc...) asparagine glycan. A glycan (N-linked (GlcNAc...) asparagine) is linked at Asn326. The cysteines at positions 362 and 410 are disulfide-linked. Fibronectin type-III domains are found at residues 441–535 (APRD…TQPE), 541–631 (PAPN…TLSD), 636–731 (APQN…TFES), 741–831 (VPSS…RPHT), 856–952 (PPVG…TFEL), and 957–1054 (PPKD…TPKA). Residues Asn470 and Asn489 are each glycosylated (N-linked (GlcNAc...) asparagine). N-linked (GlcNAc...) asparagine glycosylation is found at Asn639 and Asn715. N-linked (GlcNAc...) asparagine glycosylation occurs at Asn909. Residues 1041–1097 (GPMSEAVQFRTPKADSSDKMPNDQASGSGGKGSRLPDLGSDYKPPMSGSNSPHGSPT) form a disordered region. Residues 1052-1061 (PKADSSDKMP) show a composition bias toward basic and acidic residues. Residues 1087–1097 (SGSNSPHGSPT) are compositionally biased toward polar residues. Residues 1106–1126 (LVIIVSVGVITIVVVVIIAVF) traverse the membrane as a helical segment. Residues 1127–1461 (CTRRTTSHQK…MKDLNAITTA (335 aa)) are Cytoplasmic-facing. 4 disordered regions span residues 1138–1160 (KRAA…DVKP), 1174–1206 (PIDK…SMDS), 1235–1276 (PKMM…PARS), and 1289–1381 (TSMS…ALPS). A phosphoserine mark is found at Ser1178 and Ser1194. Positions 1191-1206 (PRNSQDITPVDNSMDS) are enriched in polar residues. Thr1198 carries the post-translational modification Phosphothreonine. Composition is skewed to polar residues over residues 1289–1322 (TSMS…TCCT) and 1330–1349 (ATSS…QSLP). A compositionally biased stretch (pro residues) spans 1366 to 1375 (AIPPPGPPTY). Ser1401 carries the phosphoserine modification. Position 1404 is a phosphothreonine (Thr1404). Phosphoserine occurs at positions 1432, 1434, and 1435.

The protein belongs to the immunoglobulin superfamily. DCC family. Interacts with MYO10. Interacts with RGMA and RGMB. Interacts with BMP2, BMP4, BMP6, and BMP7. In terms of tissue distribution, widely expressed and also in cancer cell lines.

It is found in the cell membrane. In terms of biological role, multi-functional cell surface receptor regulating cell adhesion in many diverse developmental processes, including neural tube and mammary gland formation, myogenesis and angiogenesis. Receptor for members of the BMP, netrin, and repulsive guidance molecule (RGM) families. Netrin-Neogenin interactions result in a chemoattractive axon guidance response and cell-cell adhesion, the interaction between NEO1/Neogenin and RGMa and RGMb induces a chemorepulsive response. This chain is Neogenin (NEO1), found in Homo sapiens (Human).